Reading from the N-terminus, the 370-residue chain is Peptidyl-prolyl cis-trans isomerase D (370 aa).

The residue at position 5 (S5) is a Phosphoserine. The region spanning 19-183 (FFDVDIGGER…KLCVIAECGE (165 aa)) is the PPIase cyclophilin-type domain. Position 171 is an N6-acetyllysine (K171). Positions 185–215 (KEGDEWGIFPKDGSGDSHPDFPEDADIDLKD) are chaperone activity. S198 carries the phosphoserine modification. Positions 214 to 370 (KDVDKILLIS…EKAVYAKMFA (157 aa)) are interaction with HSP90AB1. 3 TPR repeats span residues 223–256 (SEDL…LDSS), 273–306 (LSCV…DPSN), and 308–340 (KALY…APGD).

The protein belongs to the cyclophilin-type PPIase family. PPIase D subfamily. In terms of assembly, identified in ESR1 or NR3C1/GCR steroid receptor-chaperone complexes. Found in HSP90 chaperone complexes with kinase clients LCK or EIF2AK1. Two monomers associate with one HSP90 homodimer. Interacts with HSP90AA1. Interacts with HSP90AB1; PPID and FKBP4 compete for binding to HSP90AB1 and the interaction is mutually exclusive with the PPID:HSPA8 interaction. Interacts with HSPA8; PPID and STIP1 but not FKBP4 compete for binding to HSPA8 and the interaction is mutually exclusive with the PPID:HSP90AB1 interaction. Interacts with S100A1 and S100A2; the interactions dissociate the PPID:HSP90AA1 interaction. Interacts with S100A6. Interacts with MYB, ILF2, XRCC6, RACK1 and RPS3. Interacts with cytoplasmic dynein 1 intermediate chain (DYNC1I1 or DYNC1I2).

Its subcellular location is the cytoplasm. It localises to the nucleus. The protein resides in the nucleolus. The protein localises to the nucleoplasm. It catalyses the reaction [protein]-peptidylproline (omega=180) = [protein]-peptidylproline (omega=0). With respect to regulation, less sensitive to inhibition by cyclosporin A than is CYP-18. Functionally, PPIase that catalyzes the cis-trans isomerization of proline imidic peptide bonds in oligopeptides and may therefore assist protein folding. Proposed to act as a co-chaperone in HSP90 complexes such as in unligated steroid receptors heterocomplexes. Different co-chaperones seem to compete for association with HSP90 thus establishing distinct HSP90-co-chaperone-receptor complexes with the potential to exert tissue-specific receptor activity control. May have a preference for estrogen receptor complexes and is not found in glucocorticoid receptor complexes. May be involved in cytoplasmic dynein-dependent movement of the receptor from the cytoplasm to the nucleus. May regulate MYB by inhibiting its DNA-binding activity. Involved in regulation of AHR signaling by promoting the formation of the AHR:ARNT dimer; the function is independent of HSP90 but requires the chaperone activity region. Involved in regulation of UV radiation-induced apoptosis. The protein is Peptidyl-prolyl cis-trans isomerase D of Rattus norvegicus (Rat).